Consider the following 83-residue polypeptide: uncharacterized protein (83 aa).

This is an uncharacterized protein from Treponema pallidum (strain Nichols).